The sequence spans 83 residues: Small ribosomal subunit protein uS17 (83 aa).

This sequence belongs to the universal ribosomal protein uS17 family. As to quaternary structure, part of the 30S ribosomal subunit.

Its function is as follows. One of the primary rRNA binding proteins, it binds specifically to the 5'-end of 16S ribosomal RNA. The chain is Small ribosomal subunit protein uS17 from Zymomonas mobilis subsp. mobilis (strain ATCC 31821 / ZM4 / CP4).